The chain runs to 138 residues: Histone H2AX (138 aa).

The segment at 1–23 is disordered; the sequence is MSTTGKGGKAKGKTASSKQVSRS. N-acetylserine is present on Ser2. N6-acetyllysine occurs at positions 6, 9, 11, 13, and 18. Ser123 bears the Phosphoserine mark. Lys124 participates in a covalent cross-link: Glycyl lysine isopeptide (Lys-Gly) (interchain with G-Cter in ubiquitin). A phosphoserine mark is found at Ser125, Ser130, and Ser135. Residues 135-136 carry the [ST]-Q motif motif; it reads SQ.

This sequence belongs to the histone H2A family. The nucleosome is a histone octamer containing two molecules each of H2A, H2B, H3 and H4 assembled in one H3-H4 heterotetramer and two H2A-H2B heterodimers. The octamer wraps approximately 147 bp of DNA. Post-translationally, monoubiquitination of Lys-124 gives a specific tag for epigenetic transcriptional repression. In terms of processing, acetylation occurs almost exclusively in the MAC.

The protein localises to the nucleus. Its subcellular location is the chromosome. Its function is as follows. Core component of nucleosome. Nucleosomes wrap and compact DNA into chromatin, limiting DNA accessibility to the cellular machineries which require DNA as a template. Histones thereby play a central role in transcription regulation, DNA repair, DNA replication and chromosomal stability. DNA accessibility is regulated via a complex set of post-translational modifications of histones, also called histone code, and nucleosome remodeling. In Tetrahymena pyriformis, this protein is Histone H2AX (HTA1).